A 327-amino-acid polypeptide reads, in one-letter code: Glycerol-3-phosphate dehydrogenase [NAD(P)+] (327 aa).

3 residues coordinate NADPH: W11, H30, and K103. Sn-glycerol 3-phosphate contacts are provided by K103, G131, and S133. Position 135 (A135) interacts with NADPH. Sn-glycerol 3-phosphate is bound by residues K186, D243, S253, R254, and N255. Catalysis depends on K186, which acts as the Proton acceptor. Residue R254 coordinates NADPH. NADPH-binding residues include V281 and E283.

This sequence belongs to the NAD-dependent glycerol-3-phosphate dehydrogenase family.

It localises to the cytoplasm. It carries out the reaction sn-glycerol 3-phosphate + NAD(+) = dihydroxyacetone phosphate + NADH + H(+). The catalysed reaction is sn-glycerol 3-phosphate + NADP(+) = dihydroxyacetone phosphate + NADPH + H(+). The protein operates within membrane lipid metabolism; glycerophospholipid metabolism. Its function is as follows. Catalyzes the reduction of the glycolytic intermediate dihydroxyacetone phosphate (DHAP) to sn-glycerol 3-phosphate (G3P), the key precursor for phospholipid synthesis. This Wolbachia sp. subsp. Brugia malayi (strain TRS) protein is Glycerol-3-phosphate dehydrogenase [NAD(P)+].